Consider the following 309-residue polypeptide: Taste receptor type 2 member 43 (309 aa).

A topological domain (extracellular) is located at residue Met1. Residues 2 to 22 (ITFLPIIFSSLVVVTFVIGNF) form a helical membrane-spanning segment. At 23 to 46 (ANGFIALVNSIEWFKRQKISFADQ) the chain is on the cytoplasmic side. A helical transmembrane segment spans residues 47-67 (ILTALAVSRVGLLWVLLLNWY). The Extracellular portion of the chain corresponds to 68 to 86 (STVLNPAFNSVEVRTTAYN). A helical transmembrane segment spans residues 87-107 (IWAVINHFSNWLATTLSIFYL). Over 108 to 126 (LKIANFSNFIFLHLKRRVK) the chain is Cytoplasmic. The chain crosses the membrane as a helical span at residues 127-147 (SVILVMLLGPLLFLACHLFVI). At 148–178 (NMNEIVRTKEFEGNMTWKIKLKSAMYFSNMT) the chain is on the extracellular side. 2 N-linked (GlcNAc...) asparagine glycosylation sites follow: Asn161 and Asn176. Residues 179 to 199 (VTMVANLVPFTLTLLSFMLLI) traverse the membrane as a helical segment. The Cytoplasmic portion of the chain corresponds to 200–229 (CSLCKHLKKMQLHGKGSQDPSTKVHIKALQ). The helical transmembrane segment at 230–250 (TVISFLLLCAIYFLSIMISVW) threads the bilayer. Residues 251-259 (SFGSLENKP) lie on the Extracellular side of the membrane. Residues 260–280 (VFMFCKAIRFSYPSIHPFILI) form a helical membrane-spanning segment. The Cytoplasmic segment spans residues 281–309 (WGNKKLKQTFLSVFWQMRYWVKGEKTSSP).

This sequence belongs to the G-protein coupled receptor T2R family. Expressed in subsets of taste receptor cells of the tongue and exclusively in gustducin-positive cells. Expressed in airway epithelia.

The protein resides in the membrane. It is found in the cell projection. The protein localises to the cilium membrane. Gustducin-coupled receptor immplicated in the perception of bitter compounds in the oral cavity and the gastrointestinal tract. Signals through PLCB2 and the calcium-regulated cation channel TRPM5. Activated by the sulfonyl amide sweeteners saccharin and acesulfame K. In airway epithelial cells, binding of bitter compounds increases the intracellular calcium ion concentration and stimulates ciliary beat frequency. May act as chemosensory receptors in airway epithelial cells to detect and eliminate potential noxious agents from the airways. The sequence is that of Taste receptor type 2 member 43 (TAS2R43) from Homo sapiens (Human).